The chain runs to 416 residues: Enolase (416 aa).

Glutamine 160 provides a ligand contact to (2R)-2-phosphoglycerate. Catalysis depends on glutamate 204, which acts as the Proton donor. Aspartate 239, glutamate 280, and aspartate 306 together coordinate Mg(2+). (2R)-2-phosphoglycerate-binding residues include lysine 331, arginine 360, serine 361, and lysine 382. Catalysis depends on lysine 331, which acts as the Proton acceptor.

It belongs to the enolase family. Mg(2+) is required as a cofactor.

It is found in the cytoplasm. Its subcellular location is the secreted. It localises to the cell surface. The enzyme catalyses (2R)-2-phosphoglycerate = phosphoenolpyruvate + H2O. The protein operates within carbohydrate degradation; glycolysis; pyruvate from D-glyceraldehyde 3-phosphate: step 4/5. Functionally, catalyzes the reversible conversion of 2-phosphoglycerate (2-PG) into phosphoenolpyruvate (PEP). It is essential for the degradation of carbohydrates via glycolysis. The sequence is that of Enolase from Sulfurisphaera tokodaii (strain DSM 16993 / JCM 10545 / NBRC 100140 / 7) (Sulfolobus tokodaii).